Here is a 111-residue protein sequence, read N- to C-terminus: Ribosome-binding factor A (111 aa).

This sequence belongs to the RbfA family. Monomer. Binds 30S ribosomal subunits, but not 50S ribosomal subunits or 70S ribosomes.

The protein localises to the cytoplasm. In terms of biological role, one of several proteins that assist in the late maturation steps of the functional core of the 30S ribosomal subunit. Associates with free 30S ribosomal subunits (but not with 30S subunits that are part of 70S ribosomes or polysomes). Required for efficient processing of 16S rRNA. May interact with the 5'-terminal helix region of 16S rRNA. In Helicobacter pylori (strain Shi470), this protein is Ribosome-binding factor A.